The sequence spans 341 residues: Protein DOWNY MILDEW RESISTANCE 6 (341 aa).

A Fe2OG dioxygenase domain is found at 188–288 (QGQHMAVNYY…RLSVASFLCP (101 aa)). Residues histidine 212, aspartate 214, and histidine 269 each contribute to the Fe cation site. Arginine 279 is a binding site for 2-oxoglutarate.

The protein belongs to the iron/ascorbate-dependent oxidoreductase family. Requires Fe(2+) as cofactor.

The enzyme catalyses salicylate + NADH + O2 + H(+) = 2,3-dihydroxybenzoate + NAD(+) + H2O. Its function is as follows. Converts salicylic acid (SA) to 2,3-dihydroxybenzoic acid (2,3-DHBA). Suppressor of immunity. Regulates negatively defense associated genes expression (e.g. PR-1, PR-2, and PR-5). Negative regulator of defense against Hyaloperonospora arabidopsidis. Functionally, (Microbial infection) Required for susceptibility to the downy mildew pathogen Hyaloperonospora arabidopsidis. In terms of biological role, (Microbial infection) Required for susceptibility to Pseudomonas syringae pv. tomato DC3000. (Microbial infection) Required for susceptibility to the oomycete Phytophthora capsici. The chain is Protein DOWNY MILDEW RESISTANCE 6 from Arabidopsis thaliana (Mouse-ear cress).